A 498-amino-acid chain; its full sequence is Cyclin-L1 (498 aa).

Cyclin-like stretches follow at residues 68–169 (ERIQ…RILK) and 182–266 (KIIV…NTMK). A disordered region spans residues 294–498 (LKARGQNPNG…SGHSHSRHRR (205 aa)). Residues 311–320 (NGFSPASKPS) are compositionally biased toward polar residues. Basic and acidic residues predominate over residues 321–341 (SPRDVKMDDKSPNSKLKEPEN). Residues 366 to 396 (KNHSRSRSRSTSRSPHRHRRSHSGTYSSHSS) form an RS region. A compositionally biased stretch (basic residues) spans 367-387 (NHSRSRSRSTSRSPHRHRRSH). Residues 388-402 (SGTYSSHSSHSPSPR) show a composition bias toward low complexity. Phosphoserine occurs at positions 409 and 412. Positions 415–426 (RTDRDRPSETSR) are enriched in basic and acidic residues. Residues 427 to 440 (HSNKRRRSRSRSRS) show a composition bias toward basic residues. Over residues 441–478 (NSRERVRDRDHIKHKQERSGSGHHWDHRDRERDRSRDH) the composition is skewed to basic and acidic residues. Basic residues predominate over residues 479-498 (GRNKRQSRSHSGHSHSRHRR).

Belongs to the cyclin family. Cyclin L subfamily.

It is found in the nucleus speckle. Its subcellular location is the nucleus. The protein resides in the nucleoplasm. Its function is as follows. Involved in pre-mRNA splicing. The protein is Cyclin-L1 (ccnl1) of Danio rerio (Zebrafish).